The primary structure comprises 426 residues: Histidine--tRNA ligase (426 aa).

The protein belongs to the class-II aminoacyl-tRNA synthetase family. Homodimer.

It localises to the cytoplasm. The enzyme catalyses tRNA(His) + L-histidine + ATP = L-histidyl-tRNA(His) + AMP + diphosphate + H(+). This Streptococcus equi subsp. zooepidemicus (strain MGCS10565) protein is Histidine--tRNA ligase.